We begin with the raw amino-acid sequence, 207 residues long: Guanylate kinase (207 aa).

The Guanylate kinase-like domain maps to 6–185; that stretch reads GLLIVLSGPS…AKNRIQCIVE (180 aa). 13–20 lines the ATP pocket; that stretch reads GPSGVGKG.

It belongs to the guanylate kinase family.

It localises to the cytoplasm. The catalysed reaction is GMP + ATP = GDP + ADP. Functionally, essential for recycling GMP and indirectly, cGMP. The sequence is that of Guanylate kinase from Staphylococcus aureus (strain bovine RF122 / ET3-1).